The sequence spans 300 residues: MDKNKMSKFAHITKVHPCFNEKIHDKVGRVHLPVAPRCNIACKFCRRSLGKEACEHRPGVALSVLKPEDVESYLNKVLKEIPNIKVVGIAGPGDSLFNKETFETLKIIDEKFPNLIKCLSTNGLLLNKYYKKLADLNVKTVTVTVNAIDPEILKEIVEWVYYDKKVHYGIEGAKILIENQIDGIKKAYDEDLIIKINTVLIPEINMNHVVDIAKELKDFVYIQNIIPLIPLYKMSHLRPPTCEELKKVREECEKYIPQFRACGQCRADAVGLIKERKILEEFFKEKNKKLNVFELKHFSH.

Residues His-24 to Arg-266 enclose the Radical SAM core domain. [4Fe-4S] cluster is bound by residues Cys-38, Cys-42, and Cys-45. Residues Gly-93, Thr-144, and Ile-196 each contribute to the S-adenosyl-L-methionine site. Residues Cys-262 and Cys-265 each contribute to the [4Fe-4S] cluster site.

This sequence belongs to the radical SAM superfamily. NifB family. Monomer. [4Fe-4S] cluster serves as cofactor.

It functions in the pathway cofactor biosynthesis; Fe-Mo cofactor biosynthesis. Functionally, involved in the biosynthesis of the iron-molybdenum cofactor (FeMo-co or M-cluster) found in the dinitrogenase enzyme of the nitrogenase complex in nitrogen-fixing microorganisms. NifB catalyzes the crucial step of radical SAM-dependent carbide insertion that occurs concomitant with the insertion of a 9th sulfur and the rearrangement/coupling of two [4Fe-4S] clusters into a [8Fe-9S-C] cluster, the precursor to the M-cluster. The sequence is that of FeMo cofactor biosynthesis protein NifB from Methanocaldococcus jannaschii (strain ATCC 43067 / DSM 2661 / JAL-1 / JCM 10045 / NBRC 100440) (Methanococcus jannaschii).